Here is a 675-residue protein sequence, read N- to C-terminus: DNA ligase (675 aa).

NAD(+)-binding positions include 36-40 (DAVYD), 85-86 (SL), and E118. Residue K120 is the N6-AMP-lysine intermediate of the active site. NAD(+) is bound by residues R141, E178, K298, and K322. 4 residues coordinate Zn(2+): C416, C419, C434, and C439. The 78-residue stretch at 598 to 675 (TQPQTLSGKT…SEADLLALLQ (78 aa)) folds into the BRCT domain.

It belongs to the NAD-dependent DNA ligase family. LigA subfamily. It depends on Mg(2+) as a cofactor. Mn(2+) is required as a cofactor.

The enzyme catalyses NAD(+) + (deoxyribonucleotide)n-3'-hydroxyl + 5'-phospho-(deoxyribonucleotide)m = (deoxyribonucleotide)n+m + AMP + beta-nicotinamide D-nucleotide.. In terms of biological role, DNA ligase that catalyzes the formation of phosphodiester linkages between 5'-phosphoryl and 3'-hydroxyl groups in double-stranded DNA using NAD as a coenzyme and as the energy source for the reaction. It is essential for DNA replication and repair of damaged DNA. The chain is DNA ligase from Acaryochloris marina (strain MBIC 11017).